We begin with the raw amino-acid sequence, 108 residues long: Cell division topological specificity factor (108 aa).

This sequence belongs to the MinE family.

Its function is as follows. Prevents the cell division inhibition by proteins MinC and MinD at internal division sites while permitting inhibition at polar sites. This ensures cell division at the proper site by restricting the formation of a division septum at the midpoint of the long axis of the cell. This Prochlorococcus marinus (strain AS9601) protein is Cell division topological specificity factor.